Here is a 97-residue protein sequence, read N- to C-terminus: uncharacterized protein (97 aa).

Positions 1–24 (MTQKNGADRPDDYKRFSSLDKEYD) are enriched in basic and acidic residues. The tract at residues 1–97 (MTQKNGADRP…FEGTIDQNLD (97 aa)) is disordered. The span at 31–43 (SNTETESVNTETQ) shows a compositional bias: low complexity. Residues 44–53 (THNKENKNDT) are compositionally biased toward basic and acidic residues.

This is an uncharacterized protein from Bacillus subtilis (strain 168).